The sequence spans 334 residues: Fructose-1,6-bisphosphatase class 1 (334 aa).

The Mg(2+) site is built by Glu-87, Asp-106, Leu-108, and Asp-109. Substrate is bound by residues 109–112 (DGSS), Asn-208, and Lys-274. Glu-280 lines the Mg(2+) pocket.

The protein belongs to the FBPase class 1 family. Homotetramer. Mg(2+) is required as a cofactor.

It is found in the cytoplasm. It carries out the reaction beta-D-fructose 1,6-bisphosphate + H2O = beta-D-fructose 6-phosphate + phosphate. The protein operates within carbohydrate biosynthesis; gluconeogenesis. The chain is Fructose-1,6-bisphosphatase class 1 from Psychrobacter sp. (strain PRwf-1).